A 922-amino-acid chain; its full sequence is 1,4-alpha-glucan-branching enzyme 1, chloroplastic/amyloplastic (922 aa).

The N-terminal 47 residues, 1–47, are a transit peptide targeting the chloroplast; that stretch reads MVYTISGIRFPVLPSLHKSTLRCDRRASSHSFFLKNNSSSFSRTSLY. Residues 83 to 130 are disordered; that stretch reads LENPDITSEDAQNLEDLTMKDGNKYNIDESTSSYREVGDEKGSVTSSS. Residues 99–109 show a composition bias toward basic and acidic residues; sequence LTMKDGNKYNI. Catalysis depends on Asp494, which acts as the Nucleophile. Glu549 (proton donor) is an active-site residue. Residues 870 to 922 are disordered; sequence VESEPIELSVEEAESEPIERSVEEVESETTQQSVEVESETTQQSVEVESETTQ. A compositionally biased stretch (low complexity) spans 897–922; that stretch reads ETTQQSVEVESETTQQSVEVESETTQ.

It belongs to the glycosyl hydrolase 13 family. GlgB subfamily. As to quaternary structure, monomer. Expressed in roots, leaves, stipules, pods and flowers.

The protein localises to the plastid. Its subcellular location is the chloroplast. The protein resides in the amyloplast. It catalyses the reaction Transfers a segment of a (1-&gt;4)-alpha-D-glucan chain to a primary hydroxy group in a similar glucan chain.. It functions in the pathway glycan biosynthesis; starch biosynthesis. In terms of biological role, catalyzes the formation of the alpha-1,6-glucosidic linkages in starch by scission of a 1,4-alpha-linked oligosaccharide from growing alpha-1,4-glucan chains and the subsequent attachment of the oligosaccharide to the alpha-1,6 position. May preferentially transfer short chains during branching. Responsible for the synthesis of about 75% of the amylopectin found in the starch granules of mature embryos. This chain is 1,4-alpha-glucan-branching enzyme 1, chloroplastic/amyloplastic (SBEI), found in Pisum sativum (Garden pea).